The chain runs to 504 residues: Maturase K (504 aa).

The protein belongs to the intron maturase 2 family. MatK subfamily.

The protein localises to the plastid. It localises to the chloroplast. Functionally, usually encoded in the trnK tRNA gene intron. Probably assists in splicing its own and other chloroplast group II introns. This chain is Maturase K, found in Lupinus argenteus (Silvery lupine).